We begin with the raw amino-acid sequence, 352 residues long: tRNA-specific 2-thiouridylase MnmA (352 aa).

ATP contacts are provided by residues 7–14 and Leu-33; that span reads GLSGGVDS. Cys-94 functions as the Nucleophile in the catalytic mechanism. A disulfide bridge links Cys-94 with Cys-193. Gly-119 is an ATP binding site. The tract at residues 143 to 145 is interaction with tRNA; that stretch reads KDQ. Cys-193 (cysteine persulfide intermediate) is an active-site residue. Residues 298–299 are interaction with tRNA; that stretch reads RY.

This sequence belongs to the MnmA/TRMU family.

The protein localises to the cytoplasm. The enzyme catalyses S-sulfanyl-L-cysteinyl-[protein] + uridine(34) in tRNA + AH2 + ATP = 2-thiouridine(34) in tRNA + L-cysteinyl-[protein] + A + AMP + diphosphate + H(+). Functionally, catalyzes the 2-thiolation of uridine at the wobble position (U34) of tRNA, leading to the formation of s(2)U34. The sequence is that of tRNA-specific 2-thiouridylase MnmA from Trichormus variabilis (strain ATCC 29413 / PCC 7937) (Anabaena variabilis).